A 468-amino-acid polypeptide reads, in one-letter code: Interleukin-6 receptor subunit alpha (468 aa).

The signal sequence occupies residues 1–19 (MLAVGCALLAALLAAPGAA). Topologically, residues 20 to 365 (LAPRRCPAQE…VQDSSSVPLP (346 aa)) are extracellular. 4 cysteine pairs are disulfide-bonded: Cys25-Cys193, Cys47-Cys96, Cys121-Cys132, and Cys165-Cys176. The 87-residue stretch at 26–112 (PAQEVARGVL…AGTVHLLVDV (87 aa)) folds into the Ig-like C2-type domain. N-linked (GlcNAc...) asparagine glycans are attached at residues Asn55 and Asn93. 2 Fibronectin type-III domains span residues 113–217 (PPEE…LQPD) and 218–316 (PPAN…TPWT). Residues Asn221 and Asn245 are each glycosylated (N-linked (GlcNAc...) asparagine). Positions 303-307 (WSEWS) match the WSXWS motif motif. Residues 303–328 (WSEWSPEAMGTPWTESRSPPAENEVS) form a disordered region. An N-linked (GlcNAc...) asparagine glycan is attached at Asn350. O-linked (GlcNAc) threonine glycosylation is present at Thr352. The helical transmembrane segment at 366 to 386 (TFLVAGGSLAFGTLLCIAIVL) threads the bilayer. Over 387-468 (RFKKTWKLRA…ISNTDYFFPR (82 aa)) the chain is Cytoplasmic. The segment covering 421–433 (TPVLVPLISPPVS) has biased composition (pro residues). The segment at 421-468 (TPVLVPLISPPVSPSSLGSDNTSSHNRPDARDPRSPYDISNTDYFFPR) is disordered. The segment covering 446 to 455 (NRPDARDPRS) has biased composition (basic and acidic residues). Over residues 458–468 (DISNTDYFFPR) the composition is skewed to polar residues.

Belongs to the type I cytokine receptor family. Type 3 subfamily. In terms of assembly, component of a hexamer of two molecules each of IL6, IL6R and IL6ST; first binds to IL6 to associate with the signaling subunit IL6ST. Interacts (via N-terminal ectodomain) with SORL1; this interaction may affect IL6-binding to IL6R, hence decrease IL6 'classic-signaling'. Also interacts with SORL1; this interaction leads to soluble IL6R internalization. May form a trimeric complex with the soluble SORL1 ectodomain and circulating IL6 receptor; this interaction might stabilize circulating IL6, hence promote IL6 'trans-signaling,. In terms of processing, a short soluble form is released from the membrane by proteolysis. The sIL6R is formed mostly by limited proteolysis of membrane-bound receptors, a process referred to as ectodomain shedding, but is also directly secreted from the cells after alternative mRNA splicing. mIL6R is cleaved by the proteases ADAM10 and ADAM17. Glycosylated. Glycosylation is dispensable for transport, signaling, and cell-surface turnover. Glycosylation at Asn-55 is a protease-regulatory exosite. Glycosylation is required for ADAM17-mediated proteolysis. Expressed in peripheral blood mononuclear cells and weakly found in urine and serum. 1%-20% of the total sIL6R in plasma is generated by alternative splicing.

The protein resides in the cell membrane. It localises to the secreted. Its activity is regulated as follows. Classic and trans-signaling are both inhibited by tocilizumab, a humanized monoclonal antibody that blocks interleukin IL6R signaling. In terms of biological role, part of the receptor for interleukin 6. Binds to IL6 with low affinity, but does not transduce a signal. Signal activation necessitate an association with IL6ST. Activation leads to the regulation of the immune response, acute-phase reactions and hematopoiesis. The interaction with membrane-bound IL6R and IL6ST stimulates 'classic signaling', the restricted expression of the IL6R limits classic IL6 signaling to only a few tissues such as the liver and some cells of the immune system. Whereas the binding of IL6 and soluble IL6R to IL6ST stimulates 'trans-signaling'. Alternatively, 'cluster signaling' occurs when membrane-bound IL6:IL6R complexes on transmitter cells activate IL6ST receptors on neighboring receiver cells. Functionally, signaling via the membrane-bound IL6R is mostly regenerative and anti-inflammatory. Drives naive CD4(+) T cells to the Th17 lineage, through 'cluster signaling' by dendritic cells. Its function is as follows. Soluble form of IL6 receptor (sIL6R) that acts as an agonist of IL6 activity. The IL6:sIL6R complex (hyper-IL6) binds to IL6ST/gp130 on cell surfaces and induces signaling also on cells that do not express membrane-bound IL6R in a process called IL6 'trans-signaling'. sIL6R is causative for the pro-inflammatory properties of IL6 and an important player in the development of chronic inflammatory diseases. In complex with IL6, is required for induction of VEGF production. Plays a protective role during liver injury, being required for maintenance of tissue regeneration. 'Trans-signaling' in central nervous system regulates energy and glucose homeostasis. This chain is Interleukin-6 receptor subunit alpha, found in Homo sapiens (Human).